Reading from the N-terminus, the 479-residue chain is Rifampicin monooxygenase (479 aa).

FAD is bound by residues T12, D31, K32, R41, Q98, V122, T156, D278, L291, and N292.

This sequence belongs to the rifampicin monooxygenase family. FAD serves as cofactor.

It carries out the reaction rifampicin + NADPH + O2 = rifampicin para-naphthoquinone carboxamide + NADP(+) + H2O + H(+). It catalyses the reaction rifampicin + NADH + O2 = rifampicin para-naphthoquinone carboxamide + NAD(+) + H2O + H(+). Monooxygenase that can modify rifampicin, thereby inactivating its antibiotic activity. The chain is Rifampicin monooxygenase from Rhodococcus hoagii (Corynebacterium equii).